We begin with the raw amino-acid sequence, 835 residues long: Cap-specific mRNA (nucleoside-2'-O-)-methyltransferase 1 (835 aa).

The tract at residues 1–66 is disordered; the sequence is MKRRNDSECT…TEGKQRSSDS (66 aa). The short motif at 2 to 19 is the Bipartite nuclear localization signal element; sequence KRRNDSECTAPLKKQKKR. 5 positions are modified to phosphoserine: Ser28, Ser31, Ser53, Ser66, and Ser91. Basic and acidic residues predominate over residues 57 to 66; that stretch reads TEGKQRSSDS. Residues 87-133 enclose the G-patch domain; the sequence is YNSVSQKLMAKMGFKEGEGLGKYSQGRKDIVEASNQKGRRGLGLTLQ. Lys108 carries the N6-acetyllysine modification. Substrate contacts are provided by residues 203 to 207 and Arg218; that span reads KSVFD. The RrmJ-type SAM-dependent 2'-O-MTase domain maps to 231–450; sequence FFLNRAAMKM…ERYVVCKGLK (220 aa). Asn234 serves as a coordination point for S-adenosyl-L-methionine. The active site involves Lys239. Residues 277–283 and 335–336 contribute to the S-adenosyl-L-methionine site; these read CAGPGGF and DI. The active site involves Asp364. Position 374–376 (374–376) interacts with substrate; the sequence is NLQ. The active-site Proton acceptor is the Lys404. Asn439 lines the substrate pocket. The tract at residues 727–835 is interaction with POLR2A; it reads SSGTPKLSYT…VLSFIQTHSA (109 aa). Residues 752-786 enclose the WW domain; the sequence is RTVNEPWTMGFSKSFKRKFFYNKKTKNSTFDLPAD.

In terms of assembly, interacts with POLR2A (via C-terminus).

The protein localises to the nucleus. The catalysed reaction is a 5'-end (N(7)-methyl 5'-triphosphoguanosine)-ribonucleoside in mRNA + S-adenosyl-L-methionine = a 5'-end (N(7)-methyl 5'-triphosphoguanosine)-(2'-O-methyl-ribonucleoside) in mRNA + S-adenosyl-L-homocysteine + H(+). S-adenosyl-L-methionine-dependent methyltransferase that mediates mRNA cap1 2'-O-ribose methylation to the 5'-cap structure of mRNAs. Methylates the ribose of the first nucleotide of a m(7)GpppG-capped mRNA and small nuclear RNA (snRNA) to produce m(7)GpppRm (cap1). Displays a preference for cap0 transcripts. Cap1 modification is linked to higher levels of translation. May be involved in the interferon response pathway. The chain is Cap-specific mRNA (nucleoside-2'-O-)-methyltransferase 1 (CMTR1) from Bos taurus (Bovine).